Reading from the N-terminus, the 107-residue chain is Diuretic hormone 45 (107 aa).

Residues 1–44 (LYAMSPMAARYSAGAPWLYLLADMPRDSQRLVDPADLHEGRARP) constitute a propeptide that is removed on maturation. V91 carries the valine amide modification.

In terms of tissue distribution, expressed in corpora cardiaca (CC), corpora allata (CA), antennal lobe (AL) and gnathal ganglion (GNG) (at protein level). Expression in AL and GNG detected in some animals, in CC and CA in few animals (at protein level).

It is found in the secreted. Regulation of fluid secretion. The protein is Diuretic hormone 45 of Agrotis ipsilon (Black cutworm moth).